The sequence spans 330 residues: Dof zinc finger protein DOF2.4 (330 aa).

Over residues Asn14–His25 the composition is skewed to polar residues. The disordered stretch occupies residues Asn14–Ala70. Over residues Pro40–Asn55 the composition is skewed to low complexity. Positions Gly56 to Ile68 are enriched in gly residues. The segment at Leu89–Arg143 adopts a Dof-type zinc-finger fold. Cys91, Cys94, Cys116, and Cys119 together coordinate Zn(2+). 2 disordered regions span residues Pro133–Ser165 and Gln255–Gly276. The segment covering Ser146–Ser165 has biased composition (low complexity). Residues Glu265–Gly276 are compositionally biased toward polar residues.

Specific to the vascular tissues. The PEAR proteins (e.g. DOF2.4, DOF5.1, DOF3.2, DOF1.1, DOF5.6 and DOF5.3) form a short-range concentration gradient that peaks at protophloem sieve elements (PSE).

The protein localises to the nucleus. The protein resides in the symplast. Transcription factor that binds specifically to a 5'-AA[AG]G-3' consensus core sequence. Probably involved in early processes for vascular development. The PEAR proteins (e.g. DOF2.4, DOF5.1, DOF3.2, DOF1.1, DOF5.6 and DOF5.3) activate gene expression that promotes radial growth of protophloem sieve elements. Triggers the transcription of HD-ZIP III genes, especially in the central domain of vascular tissue. This chain is Dof zinc finger protein DOF2.4, found in Arabidopsis thaliana (Mouse-ear cress).